Consider the following 435-residue polypeptide: Tyrosine-protein phosphatase non-receptor type 1 (435 aa).

M1 is subject to N-acetylmethionine. Residues 3-277 (MEKEFEQIDK…RFSYLAVIEG (275 aa)) enclose the Tyrosine-protein phosphatase domain. Y20 is modified (phosphotyrosine). S50 is modified (phosphoserine; by PKB/AKT1, CLK1 and CLK2). A Phosphotyrosine; by EGFR modification is found at Y66. Residues D181 and 215–221 (CSAGIGR) each bind substrate. Residue C215 is the Phosphocysteine intermediate of the active site. Residue C215 is modified to Cysteine persulfide; alternate. C215 carries the post-translational modification Cysteine sulfenic acid (-SOH); alternate. The residue at position 215 (C215) is a Cysteine sulfinic acid (-SO2H); alternate. The residue at position 215 (C215) is an S-nitrosocysteine; in reversibly inhibited form. Residues 215-216 (CS) constitute a cross-link (n,N-(cysteine-1,S-diyl)serine (Cys-Ser); in inhibited form). S242 and S243 each carry phosphoserine; by CLK1 and CLK2. A substrate-binding site is contributed by Q262. The span at 338-351 (TQEDKDCPIKEEKG) shows a compositional bias: basic and acidic residues. The segment at 338–359 (TQEDKDCPIKEEKGSPLNAAPY) is disordered. Phosphoserine occurs at positions 352, 363, and 365. Position 368 is a phosphothreonine (T368). Position 378 is a phosphoserine; by PKC (S378). Residues 378-398 (SLRGAQAASPAKGEPSLPEKD) are disordered. At S386 the chain carries Phosphoserine; by CDK1.

It belongs to the protein-tyrosine phosphatase family. Non-receptor class 1 subfamily. Interacts with EPHA3 (phosphorylated); dephosphorylates EPHA3 and may regulate its trafficking and function. Interacts with MET. Interacts with NCK1. Post-translationally, oxidized on Cys-215; the Cys-SOH formed in response to redox signaling reacts with the alpha-amido of the following residue to form a sulfenamide cross-link, triggering a conformational change that inhibits substrate binding and activity. The active site can be restored by reduction. Ser-50 is the major site of phosphorylation as compared to Ser-242 and Ser-243. Activated by phosphorylation at Ser-50. In terms of processing, S-nitrosylation of Cys-215 inactivates the enzyme activity. Post-translationally, sulfhydration at Cys-215 following endoplasmic reticulum stress inactivates the enzyme activity, promoting EIF2AK3/PERK activity. As to expression, expressed in keratinocytes (at protein level).

The protein resides in the endoplasmic reticulum membrane. The catalysed reaction is O-phospho-L-tyrosyl-[protein] + H2O = L-tyrosyl-[protein] + phosphate. Its function is as follows. Tyrosine-protein phosphatase which acts as a regulator of endoplasmic reticulum unfolded protein response. Mediates dephosphorylation of EIF2AK3/PERK; inactivating the protein kinase activity of EIF2AK3/PERK. May play an important role in CKII- and p60c-src-induced signal transduction cascades. May regulate the EFNA5-EPHA3 signaling pathway which modulates cell reorganization and cell-cell repulsion. May also regulate the hepatocyte growth factor receptor signaling pathway through dephosphorylation of MET. This chain is Tyrosine-protein phosphatase non-receptor type 1 (PTPN1), found in Homo sapiens (Human).